A 229-amino-acid polypeptide reads, in one-letter code: DNA polymerase III subunit epsilon (229 aa).

A divalent metal cation contacts are provided by D10 and E12. Substrate-binding residues include D10, E12, E55, and H60. Residue H156 is the Proton acceptor of the active site. D161 serves as a coordination point for a divalent metal cation. D161 contacts substrate.

As to quaternary structure, DNA polymerase III contains a core (composed of alpha, epsilon and theta chains) that associates with a tau subunit. This core dimerizes to form the POLIII' complex. PolIII' associates with the gamma complex (composed of gamma, delta, delta', psi and chi chains) and with the beta chain to form the complete DNA polymerase III complex. It depends on Mg(2+) as a cofactor. The cofactor is Mn(2+).

It carries out the reaction DNA(n) + a 2'-deoxyribonucleoside 5'-triphosphate = DNA(n+1) + diphosphate. Its function is as follows. DNA polymerase III is a complex, multichain enzyme responsible for most of the replicative synthesis in bacteria. The epsilon subunit contain the editing function and is a proofreading 3'-5' exonuclease. The chain is DNA polymerase III subunit epsilon (dnaQ) from Rickettsia prowazekii (strain Madrid E).